The chain runs to 142 residues: 3-hydroxyacyl-[acyl-carrier-protein] dehydratase FabZ (142 aa).

H50 is a catalytic residue.

Belongs to the thioester dehydratase family. FabZ subfamily.

Its subcellular location is the cytoplasm. The catalysed reaction is a (3R)-hydroxyacyl-[ACP] = a (2E)-enoyl-[ACP] + H2O. Involved in unsaturated fatty acids biosynthesis. Catalyzes the dehydration of short chain beta-hydroxyacyl-ACPs and long chain saturated and unsaturated beta-hydroxyacyl-ACPs. The sequence is that of 3-hydroxyacyl-[acyl-carrier-protein] dehydratase FabZ from Clostridium botulinum (strain Alaska E43 / Type E3).